The sequence spans 256 residues: Glucanase inhibitor protein 2 (256 aa).

A signal peptide spans 1–15; the sequence is MKLISTIAAATTAFG. The 228-residue stretch at 27–254 folds into the Peptidase S1 domain; it reads IFGGGIIPSG…ATEWINSVTK (228 aa). A disulfide bond links C54 and C70. N-linked (GlcNAc...) asparagine glycosylation is found at N87, N102, N107, and N157. Intrachain disulfides connect C177–C189 and C199–C230.

It belongs to the peptidase S1 family. In terms of assembly, forms an apoplastic complex with host endoglucanases in tomato leaves during P.infestans infection.

The protein localises to the secreted. Its function is as follows. Secreted effector that suppresses host plant glucan elicitor-mediated defense responses. Targets host endoglucanases and inhibits the endoglucanase-mediated release of elicitor-active glucan oligosaccharides from P.infestans cell walls. This is Glucanase inhibitor protein 2 from Phytophthora infestans (Potato late blight agent).